We begin with the raw amino-acid sequence, 386 residues long: 5-amino-6-(D-ribitylamino)uracil--L-tyrosine 4-hydroxyphenyl transferase (386 aa).

A Radical SAM core domain is found at 56-303 (VSYVINRNLN…MAVARLYLGD (248 aa)). The [4Fe-4S] cluster site is built by Cys-70, Cys-74, and Cys-77.

The protein belongs to the radical SAM superfamily. CofH family. Consists of two subunits, CofG and CofH. [4Fe-4S] cluster serves as cofactor.

It catalyses the reaction 5-amino-6-(D-ribitylamino)uracil + L-tyrosine + S-adenosyl-L-methionine = 5-amino-5-(4-hydroxybenzyl)-6-(D-ribitylimino)-5,6-dihydrouracil + 2-iminoacetate + 5'-deoxyadenosine + L-methionine + H(+). It participates in cofactor biosynthesis; coenzyme F0 biosynthesis. Catalyzes the radical-mediated synthesis of 5-amino-5-(4-hydroxybenzyl)-6-(D-ribitylimino)-5,6-dihydrouracil from 5-amino-6-(D-ribitylamino)uracil and L-tyrosine. This chain is 5-amino-6-(D-ribitylamino)uracil--L-tyrosine 4-hydroxyphenyl transferase, found in Synechococcus elongatus (strain ATCC 33912 / PCC 7942 / FACHB-805) (Anacystis nidulans R2).